A 367-amino-acid polypeptide reads, in one-letter code: Leucine-rich repeat-containing protein 28 (367 aa).

9 LRR repeats span residues 16–36 (KHKN…ELLK), 42–63 (YLER…LAQK), 66–87 (NLVE…IGSL), 89–111 (KLQS…GRLK), 112–133 (SLRH…IGKL), 135–156 (ELQT…LYQC), 158–179 (SLQY…LCQL), 181–202 (SLNE…LGRS), and 204–226 (ELQY…LYNK).

The protein is Leucine-rich repeat-containing protein 28 (lrrc28) of Xenopus tropicalis (Western clawed frog).